The sequence spans 532 residues: E3 ubiquitin-protein ligase rnf8-B (532 aa).

Residues 30-84 (VTMGRGLGVTYQLKPTLCPLMISRTHCLFKQNARDEWTVTDNKSLNGVWRNKERL) enclose the FHA domain. Positions 127-209 (SLIRPLPGKT…VETDTVSPTQ (83 aa)) are disordered. Residues 169-178 (VSRDGEDSAK) show a composition bias toward basic and acidic residues. An RING-type zinc finger spans residues 377–415 (CIICSEHFIEAVTLNCAHSFCSYCIKSWRKRKEECPICR).

The protein belongs to the RNF8 family. As to quaternary structure, homodimer. Forms a E2-E3 ubiquitin ligase complex composed of the rnf8 homodimer and a E2 heterodimer of ube2n and ube2v2.

It localises to the nucleus. The enzyme catalyses S-ubiquitinyl-[E2 ubiquitin-conjugating enzyme]-L-cysteine + [acceptor protein]-L-lysine = [E2 ubiquitin-conjugating enzyme]-L-cysteine + N(6)-ubiquitinyl-[acceptor protein]-L-lysine.. Its pathway is protein modification; protein ubiquitination. E3 ubiquitin-protein ligase that plays a key role in DNA damage signaling via 2 distinct roles: by mediating the 'Lys-63'-linked ubiquitination of histones H2A and H2AX and promoting the recruitment of DNA repair proteins at double-strand breaks (DSBs) sites, and by catalyzing 'Lys-48'-linked ubiquitination to remove target proteins from DNA damage sites. Following DNA DSBs, it is recruited to the sites of damage by ATM-phosphorylated mdc1 and catalyzes the 'Lys-63'-linked ubiquitination of histones H2A and H2AX, thereby promoting the formation of tp53bp1 and brca1 ionizing radiation-induced foci (IRIF). H2A ubiquitination also mediates the ATM-dependent transcriptional silencing at regions flanking DSBs in cis, a mechanism to avoid collision between transcription and repair intermediates. Also catalyzes the formation of 'Lys-48'-linked polyubiquitin chains, leading to degradation of substrate proteins. In addition to its function in damage signaling, also plays a role in higher-order chromatin structure by mediating extensive chromatin decondensation. The protein is E3 ubiquitin-protein ligase rnf8-B of Xenopus laevis (African clawed frog).